Here is a 601-residue protein sequence, read N- to C-terminus: DnaJ-like protein MG200 (601 aa).

The J domain occupies 5 to 77 (KRDYYEVLGI…DKYGFDGVDG (73 aa)). 2 disordered regions span residues 143 to 163 (VQQN…VPGE) and 205 to 272 (VDSE…EPIP). Over residues 151 to 160 (KDPDELRSKV) the composition is skewed to basic and acidic residues. Residues 263–272 (EPTPIPEPIP) show a composition bias toward pro residues.

The chain is DnaJ-like protein MG200 from Mycoplasma genitalium (strain ATCC 33530 / DSM 19775 / NCTC 10195 / G37) (Mycoplasmoides genitalium).